A 647-amino-acid chain; its full sequence is Protein RAD61 (647 aa).

The disordered stretch occupies residues 1-90 (MRAYGKRGPV…QLDSKRNDQN (90 aa)). Residues 66-82 (DSSSSFDGANEKPSSQL) are compositionally biased toward polar residues.

Its subcellular location is the nucleus. In terms of biological role, involved in resistance to ionizing radiation. This is Protein RAD61 (RAD61) from Saccharomyces cerevisiae (strain ATCC 204508 / S288c) (Baker's yeast).